The chain runs to 189 residues: Peptidyl-tRNA hydrolase (189 aa).

Residue Tyr14 participates in tRNA binding. Catalysis depends on His19, which acts as the Proton acceptor. 3 residues coordinate tRNA: Tyr64, Asn66, and Asn112.

The protein belongs to the PTH family. Monomer.

It localises to the cytoplasm. It carries out the reaction an N-acyl-L-alpha-aminoacyl-tRNA + H2O = an N-acyl-L-amino acid + a tRNA + H(+). Functionally, hydrolyzes ribosome-free peptidyl-tRNAs (with 1 or more amino acids incorporated), which drop off the ribosome during protein synthesis, or as a result of ribosome stalling. Its function is as follows. Catalyzes the release of premature peptidyl moieties from peptidyl-tRNA molecules trapped in stalled 50S ribosomal subunits, and thus maintains levels of free tRNAs and 50S ribosomes. This chain is Peptidyl-tRNA hydrolase, found in Clostridium botulinum (strain Loch Maree / Type A3).